The chain runs to 413 residues: Glucose-1-phosphate adenylyltransferase (413 aa).

Alpha-D-glucose 1-phosphate-binding positions include Y102, G167, 182–183 (EK), and S200.

It belongs to the bacterial/plant glucose-1-phosphate adenylyltransferase family. In terms of assembly, homotetramer.

It catalyses the reaction alpha-D-glucose 1-phosphate + ATP + H(+) = ADP-alpha-D-glucose + diphosphate. It functions in the pathway glycan biosynthesis; glycogen biosynthesis. In terms of biological role, involved in the biosynthesis of ADP-glucose, a building block required for the elongation reactions to produce glycogen. Catalyzes the reaction between ATP and alpha-D-glucose 1-phosphate (G1P) to produce pyrophosphate and ADP-Glc. This Deinococcus geothermalis (strain DSM 11300 / CIP 105573 / AG-3a) protein is Glucose-1-phosphate adenylyltransferase.